The following is a 354-amino-acid chain: Uroporphyrinogen decarboxylase (354 aa).

Residues arginine 35 to arginine 39, aspartate 84, tyrosine 159, serine 214, and histidine 333 each bind substrate.

The protein belongs to the uroporphyrinogen decarboxylase family. Homodimer.

Its subcellular location is the cytoplasm. The enzyme catalyses uroporphyrinogen III + 4 H(+) = coproporphyrinogen III + 4 CO2. Its pathway is porphyrin-containing compound metabolism; protoporphyrin-IX biosynthesis; coproporphyrinogen-III from 5-aminolevulinate: step 4/4. Catalyzes the decarboxylation of four acetate groups of uroporphyrinogen-III to yield coproporphyrinogen-III. This chain is Uroporphyrinogen decarboxylase, found in Nocardia farcinica (strain IFM 10152).